The primary structure comprises 152 residues: Neuromedin-S (152 aa).

Positions methionine 1–glycine 26 are cleaved as a signal peptide. 3 consecutive propeptides follow at residues alanine 27–arginine 69, phenylalanine 70–arginine 105, and methionine 106–arginine 108. The residue at position 144 (asparagine 144) is an Asparagine amide. Positions tyrosine 147–glutamine 152 are excised as a propeptide.

It belongs to the NmU family. As to expression, expressed in the CNS, spleen and testis. Specifically expressed in the suprachiasmatic nuclei (SCN) of the hypothalamus.

Its subcellular location is the secreted. In terms of biological role, implicated in the regulation of circadian rhythms through autocrine and/or paracrine actions. Stimulates the contraction of rectum and elevation of blood pressure. This chain is Neuromedin-S (Nms), found in Rattus norvegicus (Rat).